Reading from the N-terminus, the 58-residue chain is Large ribosomal subunit protein uL30 (58 aa).

This sequence belongs to the universal ribosomal protein uL30 family. As to quaternary structure, part of the 50S ribosomal subunit.

In Buchnera aphidicola subsp. Baizongia pistaciae (strain Bp), this protein is Large ribosomal subunit protein uL30.